The chain runs to 257 residues: Ribonuclease PH (257 aa).

Phosphate-binding positions include Arg86 and 124 to 126; that span reads GTR.

The protein belongs to the RNase PH family. As to quaternary structure, homohexameric ring arranged as a trimer of dimers.

It catalyses the reaction tRNA(n+1) + phosphate = tRNA(n) + a ribonucleoside 5'-diphosphate. In terms of biological role, phosphorolytic 3'-5' exoribonuclease that plays an important role in tRNA 3'-end maturation. Removes nucleotide residues following the 3'-CCA terminus of tRNAs; can also add nucleotides to the ends of RNA molecules by using nucleoside diphosphates as substrates, but this may not be physiologically important. Probably plays a role in initiation of 16S rRNA degradation (leading to ribosome degradation) during starvation. This Halalkalibacterium halodurans (strain ATCC BAA-125 / DSM 18197 / FERM 7344 / JCM 9153 / C-125) (Bacillus halodurans) protein is Ribonuclease PH.